The primary structure comprises 265 residues: Polyglutamine-binding protein 1 (265 aa).

Residues 46–80 (EGLPPSWYKVFDPSCGLPYYWNADTDLVSWLSPHD) form the WW domain. S94 is modified (phosphoserine). The interval 94-265 (SSNADAEEKL…AEASRTKQQD (172 aa)) is disordered. Residues 99–175 (AEEKLDRSHD…DKADREEGKE (77 aa)) are compositionally biased toward basic and acidic residues. 15 repeat units span residues 104 to 110 (DRSHDKS), 111 to 117 (DRGHDKS), 118 to 124 (DRSHEKL), 125 to 131 (DRGHDKS), 132 to 138 (DRGHDKS), 139 to 140 (DR), 141 to 142 (DR), 143 to 144 (ER), 150 to 151 (DR), 152 to 153 (ER), 154 to 155 (ER), 156 to 157 (DR), 158 to 159 (ER), 160 to 161 (DR), and 162 to 163 (DR). The 5 X 7 AA approximate tandem repeats of D-R-[SG]-H-D-K-S stretch occupies residues 104 to 138 (DRSHDKSDRGHDKSDRSHEKLDRGHDKSDRGHDKS). Residues 139-144 (DRDRER) form a 3 X 2 AA tandem repeats of [DE]-R region. The 7 X 2 AA tandem repeats of [DE]-R stretch occupies residues 150 to 163 (DRERERDRERDRDR). The important for interaction with TXNL4A stretch occupies residues 245–255 (YPSPGAVLRAN). A Phosphoserine modification is found at S247.

In terms of assembly, interacts with POU3F2/Brn-2, ATXN1, TXNL4A, HTT and AR. Interaction with ATXN1 correlates positively with the length of the polyglutamine tract. Interacts with RNA polymerase II large subunit in a phosphorylation-dependent manner. Forms a ternary complex with ATXN1 mutant and phosphorylated RNA polymerase II. Interacts (via C-terminus) with TXNL4A and CD2BP2. Interacts (via WW domain) with ATN1 and SF3B1, and may interact with additional splice factors. Interacts (via WW domain) with WBP11; Leading to reduce interaction between PQBP1 and TXNL4A. Interacts with CAPRIN1. Interacts with DDX1. Interacts with SFPQ. Interacts with KHSRP.

It localises to the nucleus. The protein resides in the nucleus speckle. Its subcellular location is the cytoplasmic granule. Functionally, intrinsically disordered protein that acts as a scaffold, and which is involved in different processes, such as pre-mRNA splicing, transcription regulation, innate immunity and neuron development. Interacts with splicing-related factors via the intrinsically disordered region and regulates alternative splicing of target pre-mRNA species. May suppress the ability of POU3F2 to transactivate the DRD1 gene in a POU3F2 dependent manner. Can activate transcription directly or via association with the transcription machinery. May be involved in ATXN1 mutant-induced cell death. The interaction with ATXN1 mutant reduces levels of phosphorylated RNA polymerase II large subunit. Involved in the assembly of cytoplasmic stress granule, possibly by participating in the transport of neuronal RNA granules. Also acts as an innate immune sensor of infection by retroviruses, by detecting the presence of reverse-transcribed DNA in the cytosol. Directly binds retroviral reverse-transcribed DNA in the cytosol and interacts with CGAS, leading to activate the cGAS-STING signaling pathway, triggering type-I interferon production. This Gorilla gorilla gorilla (Western lowland gorilla) protein is Polyglutamine-binding protein 1 (PQBP1).